The primary structure comprises 515 residues: Maturase K (515 aa).

Belongs to the intron maturase 2 family. MatK subfamily.

Its subcellular location is the plastid. The protein localises to the chloroplast. In terms of biological role, usually encoded in the trnK tRNA gene intron. Probably assists in splicing its own and other chloroplast group II introns. The polypeptide is Maturase K (Sorghum bicolor (Sorghum)).